Consider the following 99-residue polypeptide: Integration host factor subunit alpha (99 aa).

It belongs to the bacterial histone-like protein family. Heterodimer of an alpha and a beta chain.

Its function is as follows. This protein is one of the two subunits of integration host factor, a specific DNA-binding protein that functions in genetic recombination as well as in transcriptional and translational control. This is Integration host factor subunit alpha (ihfA) from Xylella fastidiosa (strain 9a5c).